Here is a 102-residue protein sequence, read N- to C-terminus: MNQTKLNQRLKQQQLFDIYGELLTKRQACYFNEYINLDLSMQEIADKYQVKKSSIHQHIKTCNLIFNRFEAKLQLFKKQQLRLKLYEKITDPQLREQLIKLR.

This sequence belongs to the UPF0122 family.

Functionally, might take part in the signal recognition particle (SRP) pathway. This is inferred from the conservation of its genetic proximity to ftsY/ffh. May be a regulatory protein. The sequence is that of UPF0122 protein MPN_424 from Mycoplasma pneumoniae (strain ATCC 29342 / M129 / Subtype 1) (Mycoplasmoides pneumoniae).